Here is a 73-residue protein sequence, read N- to C-terminus: Translational regulator CsrA (73 aa).

The tract at residues 54 to 73 (ENRAASDSPWSPNSLPQLPV) is disordered. Over residues 61-73 (SPWSPNSLPQLPV) the composition is skewed to polar residues.

It belongs to the CsrA/RsmA family. In terms of assembly, homodimer; the beta-strands of each monomer intercalate to form a hydrophobic core, while the alpha-helices form wings that extend away from the core.

Its subcellular location is the cytoplasm. A translational regulator that binds mRNA to regulate translation initiation and/or mRNA stability. Usually binds in the 5'-UTR at or near the Shine-Dalgarno sequence preventing ribosome-binding, thus repressing translation. Its main target seems to be the major flagellin gene, while its function is anatagonized by FliW. This Treponema pallidum (strain Nichols) protein is Translational regulator CsrA.